A 494-amino-acid chain; its full sequence is Glutamyl-tRNA reductase (494 aa).

Residues 58–61 (TCNR), S118, 123–125 (EQQ), and Q129 each bind substrate. The active-site Nucleophile is the C59. 205-210 (GAGAMA) is a binding site for NADP(+). Residues 448 to 494 (KGANAGSGQRKKQKPQENRVSTARAVYRSTYQDLTQASTPGGKDDDQ) are disordered. Polar residues predominate over residues 476–486 (STYQDLTQAST).

Belongs to the glutamyl-tRNA reductase family. Homodimer.

It catalyses the reaction (S)-4-amino-5-oxopentanoate + tRNA(Glu) + NADP(+) = L-glutamyl-tRNA(Glu) + NADPH + H(+). It functions in the pathway porphyrin-containing compound metabolism; protoporphyrin-IX biosynthesis; 5-aminolevulinate from L-glutamyl-tRNA(Glu): step 1/2. Functionally, catalyzes the NADPH-dependent reduction of glutamyl-tRNA(Glu) to glutamate 1-semialdehyde (GSA). The protein is Glutamyl-tRNA reductase of Corynebacterium urealyticum (strain ATCC 43042 / DSM 7109).